A 364-amino-acid chain; its full sequence is Aminomethyltransferase (364 aa).

It belongs to the GcvT family. In terms of assembly, the glycine cleavage system is composed of four proteins: P, T, L and H.

It carries out the reaction N(6)-[(R)-S(8)-aminomethyldihydrolipoyl]-L-lysyl-[protein] + (6S)-5,6,7,8-tetrahydrofolate = N(6)-[(R)-dihydrolipoyl]-L-lysyl-[protein] + (6R)-5,10-methylene-5,6,7,8-tetrahydrofolate + NH4(+). Functionally, the glycine cleavage system catalyzes the degradation of glycine. The chain is Aminomethyltransferase from Escherichia coli O6:H1 (strain CFT073 / ATCC 700928 / UPEC).